The following is a 293-amino-acid chain: Acetylglutamate kinase (293 aa).

Residues 68–69, R90, and N189 contribute to the substrate site; that span reads GG.

It belongs to the acetylglutamate kinase family. ArgB subfamily.

It is found in the cytoplasm. The enzyme catalyses N-acetyl-L-glutamate + ATP = N-acetyl-L-glutamyl 5-phosphate + ADP. The protein operates within amino-acid biosynthesis; L-arginine biosynthesis; N(2)-acetyl-L-ornithine from L-glutamate: step 2/4. Catalyzes the ATP-dependent phosphorylation of N-acetyl-L-glutamate. This chain is Acetylglutamate kinase, found in Caldicellulosiruptor saccharolyticus (strain ATCC 43494 / DSM 8903 / Tp8T 6331).